Consider the following 125-residue polypeptide: Large ribosomal subunit protein bL17 (125 aa).

Belongs to the bacterial ribosomal protein bL17 family. In terms of assembly, part of the 50S ribosomal subunit. Contacts protein L32.

This is Large ribosomal subunit protein bL17 from Syntrophus aciditrophicus (strain SB).